A 139-amino-acid polypeptide reads, in one-letter code: 3-hydroxyacyl-[acyl-carrier-protein] dehydratase FabZ (139 aa).

Residue His47 is part of the active site.

This sequence belongs to the thioester dehydratase family. FabZ subfamily.

Its subcellular location is the cytoplasm. The catalysed reaction is a (3R)-hydroxyacyl-[ACP] = a (2E)-enoyl-[ACP] + H2O. Involved in unsaturated fatty acids biosynthesis. Catalyzes the dehydration of short chain beta-hydroxyacyl-ACPs and long chain saturated and unsaturated beta-hydroxyacyl-ACPs. The sequence is that of 3-hydroxyacyl-[acyl-carrier-protein] dehydratase FabZ from Oenococcus oeni (strain ATCC BAA-331 / PSU-1).